We begin with the raw amino-acid sequence, 239 residues long: Type III effector protein HopBA1 (239 aa).

Over residues 1 to 20 the composition is skewed to low complexity; the sequence is MLNRISSSSPTSYVSSGSSS. Positions 1–31 are disordered; it reads MLNRISSSSPTSYVSSGSSSAGINPSINVRP.

It is found in the secreted. It localises to the host cell. Its function is as follows. Virulence factor recognized by the A.thaliana disease resistance protein RBA1, which triggers plant cell death. HopBA1 enhances RBA1 self-association, which is necessary for ectopic autoactivation of host cell death. The sequence is that of Type III effector protein HopBA1 from Pseudomonas syringae pv. aptata.